The primary structure comprises 529 residues: Peptide chain release factor 3 (529 aa).

A tr-type G domain is found at 11–280 (SKRRTFAIIS…SLIKWAPSPI (270 aa)). GTP-binding positions include 20–27 (SHPDAGKT), 88–92 (DTPGH), and 142–145 (NKLD).

It belongs to the TRAFAC class translation factor GTPase superfamily. Classic translation factor GTPase family. PrfC subfamily.

The protein localises to the cytoplasm. Functionally, increases the formation of ribosomal termination complexes and stimulates activities of RF-1 and RF-2. It binds guanine nucleotides and has strong preference for UGA stop codons. It may interact directly with the ribosome. The stimulation of RF-1 and RF-2 is significantly reduced by GTP and GDP, but not by GMP. The chain is Peptide chain release factor 3 from Buchnera aphidicola subsp. Schizaphis graminum (strain Sg).